Here is a 445-residue protein sequence, read N- to C-terminus: Glutamate--tRNA ligase 1 (445 aa).

Residues P8–N18 carry the 'HIGH' region motif. The short motif at K239–R243 is the 'KMSKS' region element. K242 lines the ATP pocket.

Belongs to the class-I aminoacyl-tRNA synthetase family. Glutamate--tRNA ligase type 1 subfamily. As to quaternary structure, monomer.

It is found in the cytoplasm. It carries out the reaction tRNA(Glu) + L-glutamate + ATP = L-glutamyl-tRNA(Glu) + AMP + diphosphate. Its function is as follows. Catalyzes the attachment of glutamate to tRNA(Glu) in a two-step reaction: glutamate is first activated by ATP to form Glu-AMP and then transferred to the acceptor end of tRNA(Glu). In Maricaulis maris (strain MCS10) (Caulobacter maris), this protein is Glutamate--tRNA ligase 1.